A 200-amino-acid chain; its full sequence is Putative HTH-type transcriptional regulator YhjB (200 aa).

An HTH luxR-type domain is found at 135 to 200 (DIKDLKSLSA…QAAMMLNISS (66 aa)). The H-T-H motif DNA-binding region spans 159-178 (NKEIGRALNISTGTVKAHLE).

In Escherichia coli (strain K12), this protein is Putative HTH-type transcriptional regulator YhjB (yhjB).